The sequence spans 236 residues: Leucyl/phenylalanyl-tRNA--protein transferase (236 aa).

This sequence belongs to the L/F-transferase family.

Its subcellular location is the cytoplasm. It catalyses the reaction N-terminal L-lysyl-[protein] + L-leucyl-tRNA(Leu) = N-terminal L-leucyl-L-lysyl-[protein] + tRNA(Leu) + H(+). The catalysed reaction is N-terminal L-arginyl-[protein] + L-leucyl-tRNA(Leu) = N-terminal L-leucyl-L-arginyl-[protein] + tRNA(Leu) + H(+). The enzyme catalyses L-phenylalanyl-tRNA(Phe) + an N-terminal L-alpha-aminoacyl-[protein] = an N-terminal L-phenylalanyl-L-alpha-aminoacyl-[protein] + tRNA(Phe). Functions in the N-end rule pathway of protein degradation where it conjugates Leu, Phe and, less efficiently, Met from aminoacyl-tRNAs to the N-termini of proteins containing an N-terminal arginine or lysine. This chain is Leucyl/phenylalanyl-tRNA--protein transferase, found in Shewanella oneidensis (strain ATCC 700550 / JCM 31522 / CIP 106686 / LMG 19005 / NCIMB 14063 / MR-1).